Consider the following 126-residue polypeptide: Profilin (126 aa).

Belongs to the profilin family. As to quaternary structure, occurs in many kinds of cells as a complex with monomeric actin in a 1:1 ratio.

The protein localises to the cytoplasm. Its subcellular location is the cytoskeleton. Functionally, binds to actin and affects the structure of the cytoskeleton. At high concentrations, profilin prevents the polymerization of actin, whereas it enhances it at low concentrations. By binding to PIP2, it inhibits the formation of IP3 and DG. The chain is Profilin (PFY1) from Saccharomyces cerevisiae (strain ATCC 204508 / S288c) (Baker's yeast).